The primary structure comprises 139 residues: Endocuticle structural glycoprotein SgAbd-8 (139 aa).

Gln-1 bears the Pyrrolidone carboxylic acid mark. An O-linked (HexNAc...) threonine glycan is attached at Thr-14. The O-linked (HexNAc...) serine glycan is linked to Ser-15. One can recognise a Chitin-binding type R&amp;R domain in the interval 29–99 (DGSYAWSYET…PEGAHLPTPP (71 aa)). An O-linked (HexNAc...) threonine glycan is attached at Thr-97. Residues 111-139 (FIASQPQQPGNNGGGQFPRPQPFPRPGAF) are disordered. Positions 129–139 (RPQPFPRPGAF) are enriched in pro residues.

Component of the abdominal endocuticle. This chain is Endocuticle structural glycoprotein SgAbd-8, found in Schistocerca gregaria (Desert locust).